The following is a 341-amino-acid chain: Ketol-acid reductoisomerase (NADP(+)) (341 aa).

The KARI N-terminal Rossmann domain occupies 2-181 (AKVYYNGDAN…GAARAGVLET (180 aa)). NADP(+) contacts are provided by residues 25–28 (YGSQ), arginine 48, serine 52, and 82–85 (DEKQ). The active site involves histidine 107. Glycine 133 contacts NADP(+). In terms of domain architecture, KARI C-terminal knotted spans 182–327 (TFKEETETDL…RELRSMMPFV (146 aa)). Residues aspartate 190, glutamate 194, glutamate 226, and glutamate 230 each contribute to the Mg(2+) site. Serine 251 provides a ligand contact to substrate.

This sequence belongs to the ketol-acid reductoisomerase family. The cofactor is Mg(2+).

The catalysed reaction is (2R)-2,3-dihydroxy-3-methylbutanoate + NADP(+) = (2S)-2-acetolactate + NADPH + H(+). The enzyme catalyses (2R,3R)-2,3-dihydroxy-3-methylpentanoate + NADP(+) = (S)-2-ethyl-2-hydroxy-3-oxobutanoate + NADPH + H(+). It participates in amino-acid biosynthesis; L-isoleucine biosynthesis; L-isoleucine from 2-oxobutanoate: step 2/4. Its pathway is amino-acid biosynthesis; L-valine biosynthesis; L-valine from pyruvate: step 2/4. In terms of biological role, involved in the biosynthesis of branched-chain amino acids (BCAA). Catalyzes an alkyl-migration followed by a ketol-acid reduction of (S)-2-acetolactate (S2AL) to yield (R)-2,3-dihydroxy-isovalerate. In the isomerase reaction, S2AL is rearranged via a Mg-dependent methyl migration to produce 3-hydroxy-3-methyl-2-ketobutyrate (HMKB). In the reductase reaction, this 2-ketoacid undergoes a metal-dependent reduction by NADPH to yield (R)-2,3-dihydroxy-isovalerate. The polypeptide is Ketol-acid reductoisomerase (NADP(+)) (Geobacillus thermodenitrificans (strain NG80-2)).